The chain runs to 320 residues: Rhomboid-like protein 17, chloroplastic (320 aa).

Residues Met1–Arg87 constitute a chloroplast transit peptide. 5 consecutive transmembrane segments (helical) span residues Trp116 to Thr136, Leu160 to Ile180, Leu199 to Ala219, Met247 to Leu267, and Ile295 to Ile315.

Belongs to the peptidase S54 family.

The protein localises to the plastid. Its subcellular location is the chloroplast membrane. Functionally, probable rhomboid-type serine protease that catalyzes intramembrane proteolysis. This is Rhomboid-like protein 17, chloroplastic from Arabidopsis thaliana (Mouse-ear cress).